A 227-amino-acid polypeptide reads, in one-letter code: Cytochrome c oxidase subunit 2 (227 aa).

Topologically, residues 1-14 are mitochondrial intermembrane; sequence MAYPFQLGLQDATS. Residues 15–45 traverse the membrane as a helical segment; it reads PIMEELTNFHDHTLMIVFLISSLVLYIISLM. The Mitochondrial matrix segment spans residues 46 to 59; sequence LTTKLTHTSTMDAQ. The helical transmembrane segment at 60-87 threads the bilayer; the sequence is EVETIWTILPAVILILIALPSLRILYMM. Residues 88–227 are Mitochondrial intermembrane-facing; it reads DEINNPVLTV…YFENWSASMI (140 aa). Cu cation contacts are provided by histidine 161, cysteine 196, glutamate 198, cysteine 200, histidine 204, and methionine 207. Glutamate 198 lines the Mg(2+) pocket. Tyrosine 218 is modified (phosphotyrosine).

It belongs to the cytochrome c oxidase subunit 2 family. In terms of assembly, component of the cytochrome c oxidase (complex IV, CIV), a multisubunit enzyme composed of 14 subunits. The complex is composed of a catalytic core of 3 subunits MT-CO1, MT-CO2 and MT-CO3, encoded in the mitochondrial DNA, and 11 supernumerary subunits COX4I, COX5A, COX5B, COX6A, COX6B, COX6C, COX7A, COX7B, COX7C, COX8 and NDUFA4, which are encoded in the nuclear genome. The complex exists as a monomer or a dimer and forms supercomplexes (SCs) in the inner mitochondrial membrane with NADH-ubiquinone oxidoreductase (complex I, CI) and ubiquinol-cytochrome c oxidoreductase (cytochrome b-c1 complex, complex III, CIII), resulting in different assemblies (supercomplex SCI(1)III(2)IV(1) and megacomplex MCI(2)III(2)IV(2)). Found in a complex with TMEM177, COA6, COX18, COX20, SCO1 and SCO2. Interacts with TMEM177 in a COX20-dependent manner. Interacts with COX20. Interacts with COX16. It depends on Cu cation as a cofactor.

It localises to the mitochondrion inner membrane. The enzyme catalyses 4 Fe(II)-[cytochrome c] + O2 + 8 H(+)(in) = 4 Fe(III)-[cytochrome c] + 2 H2O + 4 H(+)(out). Component of the cytochrome c oxidase, the last enzyme in the mitochondrial electron transport chain which drives oxidative phosphorylation. The respiratory chain contains 3 multisubunit complexes succinate dehydrogenase (complex II, CII), ubiquinol-cytochrome c oxidoreductase (cytochrome b-c1 complex, complex III, CIII) and cytochrome c oxidase (complex IV, CIV), that cooperate to transfer electrons derived from NADH and succinate to molecular oxygen, creating an electrochemical gradient over the inner membrane that drives transmembrane transport and the ATP synthase. Cytochrome c oxidase is the component of the respiratory chain that catalyzes the reduction of oxygen to water. Electrons originating from reduced cytochrome c in the intermembrane space (IMS) are transferred via the dinuclear copper A center (CU(A)) of subunit 2 and heme A of subunit 1 to the active site in subunit 1, a binuclear center (BNC) formed by heme A3 and copper B (CU(B)). The BNC reduces molecular oxygen to 2 water molecules using 4 electrons from cytochrome c in the IMS and 4 protons from the mitochondrial matrix. The polypeptide is Cytochrome c oxidase subunit 2 (MT-CO2) (Dacnomys millardi (Millard's rat)).